The primary structure comprises 156 residues: ATP synthase subunit b 1 (156 aa).

A helical transmembrane segment spans residues 7–29 (LLGQAISFALFVWFCMKYVWPPL).

The protein belongs to the ATPase B chain family. As to quaternary structure, F-type ATPases have 2 components, F(1) - the catalytic core - and F(0) - the membrane proton channel. F(1) has five subunits: alpha(3), beta(3), gamma(1), delta(1), epsilon(1). F(0) has three main subunits: a(1), b(2) and c(10-14). The alpha and beta chains form an alternating ring which encloses part of the gamma chain. F(1) is attached to F(0) by a central stalk formed by the gamma and epsilon chains, while a peripheral stalk is formed by the delta and b chains.

It is found in the cell inner membrane. Its function is as follows. F(1)F(0) ATP synthase produces ATP from ADP in the presence of a proton or sodium gradient. F-type ATPases consist of two structural domains, F(1) containing the extramembraneous catalytic core and F(0) containing the membrane proton channel, linked together by a central stalk and a peripheral stalk. During catalysis, ATP synthesis in the catalytic domain of F(1) is coupled via a rotary mechanism of the central stalk subunits to proton translocation. Functionally, component of the F(0) channel, it forms part of the peripheral stalk, linking F(1) to F(0). The sequence is that of ATP synthase subunit b 1 from Vibrio campbellii (strain ATCC BAA-1116).